A 185-amino-acid polypeptide reads, in one-letter code: uncharacterized protein (185 aa).

Component of the acid-insoluble and acid-soluble organic matrix of calcified layers of the shell (at protein level).

It localises to the secreted. This is an uncharacterized protein from Lottia gigantea (Giant owl limpet).